The primary structure comprises 206 residues: Flavin reductase (NADPH) (206 aa).

Residues G10, T12, G13, N14, T15, R35, S38, and R39 each contribute to the NADP(+) site. Phosphoserine is present on S42. NADP(+)-binding residues include D54, V55, L75, G76, and R78. Residue S82 is modified to Phosphoserine. NADP(+) contacts are provided by M87, C109, H132, H153, and I154. C109 functions as the S-nitroso-cysteine intermediate; for S-nitroso-CoA-dependent nitrosyltransferase activity in the catalytic mechanism. Residue C188 is the S-nitroso-cysteine intermediate; for S-nitroso-CoA-dependent nitrosyltransferase activity of the active site.

In terms of assembly, monomer. In terms of tissue distribution, at least expressed in the liver and erythrocyte.

The protein localises to the cytoplasm. It catalyses the reaction reduced riboflavin + NADP(+) = riboflavin + NADPH + 2 H(+). The enzyme catalyses bilirubin IXbeta + NADP(+) = biliverdin IXbeta + NADPH + H(+). The catalysed reaction is FMNH2 + NAD(+) = FMN + NADH + 2 H(+). It carries out the reaction FMNH2 + NADP(+) = FMN + NADPH + 2 H(+). It catalyses the reaction S-nitroso-CoA + L-cysteinyl-[protein] = S-nitroso-L-cysteinyl-[protein] + CoA. The enzyme catalyses L-cysteinyl-[SCAN] + S-nitroso-CoA = S-nitroso-L-cysteinyl-[SCAN] + CoA. The catalysed reaction is S-nitroso-L-cysteinyl-[SCAN] + L-cysteinyl-[protein] = L-cysteinyl-[SCAN] + S-nitroso-L-cysteinyl-[protein]. In terms of biological role, enzyme that can both act as a NAD(P)H-dependent reductase and a S-nitroso-CoA-dependent nitrosyltransferase. Promotes fetal heme degradation during development. Also expressed in adult tissues, where it acts as a regulator of hematopoiesis, intermediary metabolism (glutaminolysis, glycolysis, TCA cycle and pentose phosphate pathway) and insulin signaling. Has a broad specificity oxidoreductase activity by catalyzing the NAD(P)H-dependent reduction of a variety of flavins, such as riboflavin, FAD or FMN, biliverdins, methemoglobin and PQQ (pyrroloquinoline quinone). Contributes to fetal heme catabolism by catalyzing reduction of biliverdin IXbeta into bilirubin IXbeta in the liver. Biliverdin IXbeta, which constitutes the major heme catabolite in the fetus is not present in adult. Does not reduce bilirubin IXalpha. Can also reduce the complexed Fe(3+) iron to Fe(2+) in the presence of FMN and NADPH. Acts as a protein nitrosyltransferase by catalyzing nitrosylation of cysteine residues of target proteins, such as HMOX2, INSR and IRS1. S-nitroso-CoA-dependent nitrosyltransferase activity is mediated via a 'ping-pong' mechanism: BLVRB first associates with both S-nitroso-CoA and protein substrate, nitric oxide group is then transferred from S-nitroso-CoA to Cys-109 and Cys-188 residues of BLVRB and from S-nitroso-BLVRB to the protein substrate. Inhibits insulin signaling by mediating nitrosylation of INSR and IRS1, leading to their inhibition. This chain is Flavin reductase (NADPH) (BLVRB), found in Bos taurus (Bovine).